We begin with the raw amino-acid sequence, 1159 residues long: WASH complex subunit 5 (1159 aa).

Phosphoserine is present on serine 917.

Belongs to the strumpellin family. In terms of assembly, component of the WASH core complex also described as WASH regulatory complex (SHRC) composed of WASH (WASHC1, WASH2P or WASH3P), WASHC2 (WASHC2A or WASHC2C), WASHC3, WASHC4 and WASHC5. The WASH core complex associates via WASHC2 with the F-actin-capping protein dimer (formed by CAPZA1, CAPZA2 or CAPZA3 and CAPZB) in a transient or substoichiometric manner which was initially described as WASH complex. Interacts with VCP, PI4K2A. As to expression, expressed ubiquitously.

The protein localises to the cytoplasm. It localises to the cytosol. It is found in the endoplasmic reticulum. Its subcellular location is the early endosome. In terms of biological role, acts as a component of the WASH core complex that functions as a nucleation-promoting factor (NPF) at the surface of endosomes, where it recruits and activates the Arp2/3 complex to induce actin polymerization, playing a key role in the fission of tubules that serve as transport intermediates during endosome sorting. May be involved in axonal outgrowth. Involved in cellular localization of ADRB2. Involved in cellular trafficking of BLOC-1 complex cargos such as ATP7A and VAMP7. This Homo sapiens (Human) protein is WASH complex subunit 5.